The primary structure comprises 364 residues: MASLPKPTPLLKDELDIVIPTIRNLDFLEMWRPFFEQYHLIIVQDGDPSKVIKVPEGFDYELYNRNDINRILGPKASCISFKDSACRCFGYMVSKKKYIYTIDDDCFVAKDPTGHEINALEQHIKNLLSPSTPFFFNTLYDPYREGTDFVRGYPFSLREGVPTAVSHGLWLNIPDYDAPTQLVKPHERNTRFVDAVLTIPKGSLFPMCGMNLAFNRELIGPAMYFGLMGDGQPIGRYDDMWAGWCIKVICDHLGYGVKTGLPYIWHSKASNPFVNLKKEYKGIFWQEEIIPFFQAATLSKDCTSVQKCYIELSKQVKEKLGTIDPYFIKLADAMVTWVEAWDEINNNKSEETTSTKASEVAATK.

Residues 103 to 105 carry the DXD motif motif; it reads DDD. The N-linked (Glc...) arginine glycan is linked to arginine 151.

It belongs to the RGP family. Homopentamer or homohexamer. The cofactor is Mn(2+). Requires Mg(2+) as cofactor. Post-translationally, reversibly glycosylated by UDP-glucose, UDP-xylose and UDP-galactose, but not UDP-mannose.

The protein localises to the secreted. The protein resides in the cell wall. It localises to the cell junction. It is found in the plasmodesma. Its subcellular location is the golgi apparatus. It carries out the reaction UDP-beta-L-arabinofuranose = UDP-beta-L-arabinopyranose. Its activity is regulated as follows. Inhibited by inhibitor protein (IP) which may be a form of sucrose synthase. In terms of biological role, probable UDP-L-arabinose mutase involved in the biosynthesis of cell wall non-cellulosic polysaccharides. Was initially shown to possess an autoglycosylating activity which is dependent on the presence of UDP-glucose and manganese. This chain is Probable UDP-arabinopyranose mutase 1, found in Pisum sativum (Garden pea).